The sequence spans 146 residues: Gonadotropin subunit beta-2 (146 aa).

The first 22 residues, 1-22 (MTVEISKVFVLMMLNLFLGASS), serve as a signal peptide directing secretion. Disulfide bonds link Cys37–Cys85, Cys51–Cys100, Cys54–Cys138, Cys62–Cys116, Cys66–Cys118, and Cys121–Cys128. Asn41 carries an N-linked (GlcNAc...) asparagine glycan.

It belongs to the glycoprotein hormones subunit beta family. Heterodimer of an alpha and a beta chain.

It localises to the secreted. Involved in gametogenesis and steroidogenesis. The chain is Gonadotropin subunit beta-2 (cgbb) from Trichopodus trichopterus (Three spot gourami).